The sequence spans 344 residues: Arginine N-succinyltransferase (344 aa).

Position 125 (Leu-125) interacts with succinyl-CoA. His-229 functions as the Proton donor in the catalytic mechanism.

The protein belongs to the arginine N-succinyltransferase family.

It carries out the reaction succinyl-CoA + L-arginine = N(2)-succinyl-L-arginine + CoA + H(+). Its pathway is amino-acid degradation; L-arginine degradation via AST pathway; L-glutamate and succinate from L-arginine: step 1/5. Its function is as follows. Catalyzes the transfer of succinyl-CoA to arginine to produce N(2)-succinylarginine. This is Arginine N-succinyltransferase from Escherichia coli (strain UTI89 / UPEC).